Here is a 105-residue protein sequence, read N- to C-terminus: MANRIKKGDQVVINTGKDKGKQGEVVRVDGDRVIVSNANLIKRHTKPNPQAGVAGGVVEREASIHISNVNIVNPATGKGERVGFKVLEDGRKLRVFRSSGEALDA.

It belongs to the universal ribosomal protein uL24 family. Part of the 50S ribosomal subunit.

Functionally, one of two assembly initiator proteins, it binds directly to the 5'-end of the 23S rRNA, where it nucleates assembly of the 50S subunit. In terms of biological role, one of the proteins that surrounds the polypeptide exit tunnel on the outside of the subunit. This chain is Large ribosomal subunit protein uL24, found in Xanthomonas oryzae pv. oryzae (strain MAFF 311018).